A 565-amino-acid chain; its full sequence is Inositol-3-phosphate synthase (565 aa).

Glycine 70, glycine 71, asparagine 72, asparagine 73, aspartate 144, serine 180, isoleucine 181, glutamine 191, arginine 194, threonine 231, alanine 232, asparagine 233, threonine 234, glycine 282, serine 283, aspartate 307, serine 310, asparagine 341, asparagine 342, aspartate 343, lysine 356, glycine 394, aspartate 395, aspartate 423, and serine 424 together coordinate NAD(+). Serine 536 is subject to Phosphoserine. Positions 546–565 (LHANGHSNGSAKLATNGNGH) are disordered. A compositionally biased stretch (polar residues) spans 550-565 (GHSNGSAKLATNGNGH).

This sequence belongs to the myo-inositol 1-phosphate synthase family. NAD(+) is required as a cofactor. Higher expression in adult heads than bodies.

The protein localises to the cytoplasm. It catalyses the reaction D-glucose 6-phosphate = 1D-myo-inositol 3-phosphate. Its pathway is polyol metabolism; myo-inositol biosynthesis; myo-inositol from D-glucose 6-phosphate: step 1/2. Key enzyme in myo-inositol biosynthesis pathway that catalyzes the conversion of glucose 6-phosphate to 1-myo-inositol 1-phosphate in a NAD-dependent manner. Rate-limiting enzyme in the synthesis of all inositol-containing compounds. This Drosophila melanogaster (Fruit fly) protein is Inositol-3-phosphate synthase (Inos).